A 1941-amino-acid chain; its full sequence is MGDVKLFASSHMSKTSHSVDPSKVSSMPLTEAPAFILPPRNLCVKEGATAKFEGRVRGYPEPQVTWHRKGQAITNGGRFLLDCGVRGTFSLVIHTVREEDKGKYTCEASNGSGARQVTVELTVEGNSMKKRDQPVLSKASGFPGETRPSIWGECPPKFATKLGRAVVKEGQMWRFSCKITGRPPPQVTWLKGNVPLQPSARVSMSEKNGMQILEIRGVTRDDLGVYTCMVVNGSGKASMSAELSIPGLDNASRLAVRGTKAPSPDIRKEVTNGVSKDPETVAESKNCPSPQRSGSSARATNSHLKSPQEPKPKLCEDAPRKVPQSSILQKSTSTITLQALKVQPEARVPAIGSFSPGEDRKSLAAPQQATLPTRQSSLGGSVGNKFVTGNIPRESQRESTFPRFESQPQSQEVTEGQTVKFICEVSGIPKPDVGWFLEGIPVRRREGITEVYEDGVSHHLCLLRARTRDSRKYSCTASNSLGQVSCSWSLLVDRPNLAQTAPSFSSVLKDSVVIEGQDFVLRCSVQGTPAPRVTWLLNGQPIQFAHSICEAGVAELHIQDALPEDRGTYTCLAENAMGQVSCSATVTVQEKKGEGEREHRLSPARSKPIAPIFLQGLSDLKVMDGSQVTMTVQVSGNPPPEVIWLHDGNEIQESEDFHFEQKGGWHSLCIQEVFPEDTGTYTCEAWNSAGEVRTRAVLTVQEPHDGTQPWFISKPRSVTATLGQSVLISCAIAGDPFPTVHWLRDGRALSKDSGHFELLQNEDVFTLVLKNVQPWHAGQYEILLKNRVGECSCQVSLMLHNSPSRAPPRGREPASCEGLCGGGGVGAHGDGDRHGTLRPCWPARGQGWPEEEDGEDVRGLLKRRVETRLHTEEAIRQQEVGQLDFRDLLGKKVSTKTVSEDDLKDIPAEQMDFRANLQRQVKPKTISEEERKVHSPQQVDFRSVLAKKGTPKTPVPEKAPPKAATPDFRSVLGGKKKSPSENGGNSAEVLNVKAGESPTPAGDAQAIGALKPVGNAKPAETPKPIGNAKPTETLKPVGNTKPAETLKPIANAQPSGSLKPVTNAQPAEPQKPVGNAKSAETSKPAGKEEVKEVKNDVNCKKGQVGATGNEKRPESQGSAPVFKEKLQDVHVAEGEKLLLQCQVISDPPATVTWSLNGKTLKTTKFIVLAQEGSRFSVSIEKALPEDRGLYKCVAKNSAGQAECSCQVTVDDAQTSENTKAPEMKSRRPKSSLPPVLGTESDATVKKKPAPKTPTKAAMPPQIIQFPEDQKVRAGEPVELFGKVAGTQPITCKWMKFRKQIQESEHIKVENGESGSKLTILAARQEHCGCYTLVVENKLGSRQAQVNLTVVDKPDPPAGTPCASDIRSSSLTLSWYGSSYDGGSAVQSYNVEIWDTEDKVWKELATCRSTSFNVQDLLPDREYKFRVRAVNVYGTSEPSQESELTAVGEKPEEPKDEVEVSDDDEKEPEVDYRTVTVNTEQKVSDVYDIEERLGSGKFGQVFRLVEKKTGKIWAGKFFKAYSAKEKDNIRQEISIMNCLHHPKLVQCVDAFEEKANIVMVLEIVSGGELFERIIDEDFELTERECIKYMRQISEGVEYIHKQGIVHLDLKPENIMCVNKTGTRIKLIDFGLARRLENAGSLKVLFGTPEFVAPEVINYEPIGYATDMWSIGVICYILVSGLSPFMGDNDNETLANVTSATWDFDDEAFDEISDDAKDFISNLLKKDMKNRLDCTQCLQHPWLMKDTKNMEAKKLSKDRMKKYMARRKWQKTGNAVRAIGRLSSMAMISGLSGRKSSTGSPTSPINAEKLESEDDVSQAFLEAVAEEKPHVKPYFSKTIRDLEVVEGSAARFDCKIEGYPDPEVVWFKDDQSIRESRHFQIDYDEDGNCSLIISDVCGDDDAKYTCKAVNSLGEATCTAELIVETMEEGEGEEGGEEEEEEEE.

2 Ig-like C2-type domains span residues 33 to 122 (PAFI…VELT) and 156 to 244 (PKFA…AELS). The cysteines at positions 177 and 228 are disulfide-linked. The residue at position 226 (Y226) is a Phosphotyrosine; by ABL1. The disordered stretch occupies residues 255-329 (AVRGTKAPSP…RKVPQSSILQ (75 aa)). A compositionally biased stretch (polar residues) spans 286–305 (NCPSPQRSGSSARATNSHLK). S295 carries the phosphoserine modification. Basic and acidic residues predominate over residues 306–320 (SPQEPKPKLCEDAPR). Phosphoserine is present on residues S333 and S355. 4 consecutive Ig-like C2-type domains span residues 402–485 (PRFE…GQVS), 502–587 (PSFS…ATVT), 611–699 (PIFL…AVLT), and 709–809 (PWFI…APPR). Disulfide bonds link C423-C475 and C523-C571. Phosphotyrosine; by ABL1 and SRC is present on Y452. A disulfide bridge links C730 with C793. A Phosphotyrosine; by ABL1 modification is found at Y780. 4 consecutive repeat copies span residues 856-883 (DVRG…VGQL), 884-911 (DFRD…AEQM), 912-939 (DFRA…PQQV), and 940-966 (DFRS…AATP). Positions 856–985 (DVRGLLKRRV…KKSPSENGGN (130 aa)) are 5 X 28 AA approximate tandem repeats. Positions 911–951 (MDFRANLQRQVKPKTISEEERKVHSPQQVDFRSVLAKKGTP) are actin-binding (calcium/calmodulin-sensitive). The disordered stretch occupies residues 920 to 1120 (QVKPKTISEE…KRPESQGSAP (201 aa)). S935 carries the phosphoserine modification. A calmodulin-binding region spans residues 936 to 951 (PQQVDFRSVLAKKGTP). Residues 967 to 985 (DFRSVLGGKKKSPSENGGN) form a 1-5; truncated repeat. 5 tandem repeats follow at residues 990–1002 (LNVK…TPAG), 1003–1014 (DAQAIGALKPVG), 1015–1026 (NAKPAETPKPIG), 1027–1038 (NAKPTETLKPVG), and 1039–1049 (NTKPAETLKPI). The segment at 990–1049 (LNVKAGESPTPAGDAQAIGALKPVGNAKPAETPKPIGNAKPTETLKPVGNTKPAETLKPI) is 5 X 12 AA approximate tandem repeats. Residues 1048-1482 (PIANAQPSGS…TVTVNTEQKV (435 aa)) form an actin-binding (calcium/calmodulin-insensitive) region. Positions 1052 to 1065 (AQPSGSLKPVTNAQ) are enriched in polar residues. The segment covering 1085–1099 (AGKEEVKEVKNDVNC) has biased composition (basic and acidic residues). The region spanning 1120 to 1208 (PVFKEKLQDV…GQAECSCQVT (89 aa)) is the Ig-like C2-type 7 domain. C1141 and C1192 are joined by a disulfide. Positions 1212 to 1257 (AQTSENTKAPEMKSRRPKSSLPPVLGTESDATVKKKPAPKTPTKAA) are disordered. The region spanning 1260–1348 (PQIIQFPEDQ…GSRQAQVNLT (89 aa)) is the Ig-like C2-type 8 domain. Residues 1356 to 1449 (PAGTPCASDI…ESELTAVGEK (94 aa)) enclose the Fibronectin type-III domain. The interval 1435–1469 (SEPSQESELTAVGEKPEEPKDEVEVSDDDEKEPEV) is disordered. Positions 1453-1467 (PKDEVEVSDDDEKEP) are enriched in acidic residues. At S1460 the chain carries Phosphoserine. Position 1471 is a phosphotyrosine; by ABL1 (Y1471). A Protein kinase domain is found at 1486–1741 (YDIEERLGSG…CTQCLQHPWL (256 aa)). ATP is bound by residues 1492-1500 (LGSGKFGQV) and K1515. Phosphotyrosine; by ABL1 is present on Y1597. D1607 acts as the Proton acceptor in catalysis. Y1657 is subject to Phosphotyrosine; by ABL1. Residues 1733–1796 (TQCLQHPWLM…SGLSGRKSST (64 aa)) are calmodulin-binding. S1781, S1782, S1794, S1795, and S1798 each carry phosphoserine. The segment at 1789-1809 (LSGRKSSTGSPTSPINAEKLE) is disordered. The segment covering 1792-1803 (RKSSTGSPTSPI) has biased composition (polar residues). Position 1800 is a phosphothreonine (T1800). Phosphoserine is present on S1801. One can recognise an Ig-like C2-type 9 domain in the interval 1831-1920 (PYFSKTIRDL…GEATCTAELI (90 aa)). C1852 and C1904 are disulfide-bonded.

The protein belongs to the protein kinase superfamily. CAMK Ser/Thr protein kinase family. All isoforms including Telokin bind calmodulin. Interacts with CTTN; this interaction is reduced during thrombin-induced endothelial cell (EC) contraction but is promoted by the barrier-protective agonist sphingosine 1-phosphate (S1P) within lamellipodia. A complex made of ABL1, CTTN and MYLK regulates cortical actin-based cytoskeletal rearrangement critical to sphingosine 1-phosphate (S1P)-mediated endothelial cell (EC) barrier enhancement. Binds to NAA10/ARD1. Interacts with SVIL and PTK2B/PYK2. It depends on Mg(2+) as a cofactor. Ca(2+) serves as cofactor. Post-translationally, can probably be down-regulated by phosphorylation. Tyrosine phosphorylation by ABL1 increases kinase activity, reverses MLCK-mediated inhibition of Arp2/3-mediated actin polymerization, and enhances CTTN-binding. Phosphorylation by SRC at Tyr-452 promotes CTTN binding. In terms of processing, the C-terminus is deglutamylated by AGTPBP1/CCP1, AGBL1/CCP4 and AGBL4/CCP6, leading to the formation of Myosin light chain kinase, smooth muscle, deglutamylated form. The consequences of C-terminal deglutamylation are unknown. In terms of tissue distribution, smooth muscle isoform is expressed in all tissues with highest levels in bladder, uterus, vas deferens, colon, ileum, and tracheae. Isoform 1 is expressed in lung, bladder, and vas deferens. Telokin is expressed in smooth muscle cells of the gut, reproductive tract and urinary tract, including in uterus, vas deferens, bladder, colon, kidney, ureter and ovary. Telokin is also detected in the trachea.

The protein resides in the cytoplasm. It is found in the cell projection. Its subcellular location is the lamellipodium. The protein localises to the cleavage furrow. It localises to the cytoskeleton. The protein resides in the stress fiber. It carries out the reaction L-seryl-[myosin light chain] + ATP = O-phospho-L-seryl-[myosin light chain] + ADP + H(+). The catalysed reaction is L-threonyl-[myosin light chain] + ATP = O-phospho-L-threonyl-[myosin light chain] + ADP + H(+). Functionally, calcium/calmodulin-dependent myosin light chain kinase implicated in smooth muscle contraction via phosphorylation of myosin light chains (MLC). Also regulates actin-myosin interaction through a non-kinase activity. Phosphorylates PTK2B/PYK2 and myosin light-chains. Involved in the inflammatory response (e.g. apoptosis, vascular permeability, leukocyte diapedesis), cell motility and morphology, airway hyperreactivity and other activities relevant to asthma. Required for tonic airway smooth muscle contraction that is necessary for physiological and asthmatic airway resistance. Necessary for gastrointestinal motility. Implicated in the regulation of endothelial as well as vascular permeability, probably via the regulation of cytoskeletal rearrangements. In the nervous system it has been shown to control the growth initiation of astrocytic processes in culture and to participate in transmitter release at synapses formed between cultured sympathetic ganglion cells. Critical participant in signaling sequences that result in fibroblast apoptosis. Plays a role in the regulation of epithelial cell survival. Required for epithelial wound healing, especially during actomyosin ring contraction during purse-string wound closure. Mediates RhoA-dependent membrane blebbing. Triggers TRPC5 channel activity in a calcium-dependent signaling, by inducing its subcellular localization at the plasma membrane. Promotes cell migration (including tumor cells) and tumor metastasis. PTK2B/PYK2 activation by phosphorylation mediates ITGB2 activation and is thus essential to trigger neutrophil transmigration during acute lung injury (ALI). May regulate optic nerve head astrocyte migration. Probably involved in mitotic cytoskeletal regulation. Regulates tight junction probably by modulating ZO-1 exchange in the perijunctional actomyosin ring. Mediates burn-induced microvascular barrier injury; triggers endothelial contraction in the development of microvascular hyperpermeability by phosphorylating MLC. Essential for intestinal barrier dysfunction. Mediates Giardia spp.-mediated reduced epithelial barrier function during giardiasis intestinal infection via reorganization of cytoskeletal F-actin and tight junctional ZO-1. Necessary for hypotonicity-induced Ca(2+) entry and subsequent activation of volume-sensitive organic osmolyte/anion channels (VSOAC) in cervical cancer cells. The sequence is that of Myosin light chain kinase, smooth muscle from Mus musculus (Mouse).